A 761-amino-acid polypeptide reads, in one-letter code: Translation initiation factor IF-2 (761 aa).

A disordered region spans residues 39–179 (DEETLNKAKQ…KVNHQQMPLP (141 aa)). Residues 45–105 (KAKQAGKPAA…NNQQSQSQGQ (61 aa)) show a composition bias toward low complexity. Over residues 106 to 120 (TKRPSQASNNQSGAA) the composition is skewed to polar residues. The segment covering 142-154 (PGSNNRRPGNNQN) has biased composition (low complexity). Over residues 155-168 (RRNHGNRGGKRRPQ) the composition is skewed to basic residues. A tr-type G domain is found at 262-435 (ERPPVVTIMG…EVEEFKANPD (174 aa)). A G1 region spans residues 271–278 (GHVDHGKT). Residue 271-278 (GHVDHGKT) coordinates GTP. The interval 296–300 (GITQH) is G2. The interval 317-320 (DTPG) is G3. GTP-binding positions include 317–321 (DTPGH) and 371–374 (NKID). Positions 371–374 (NKID) are G4. Positions 407-409 (SAL) are G5.

This sequence belongs to the TRAFAC class translation factor GTPase superfamily. Classic translation factor GTPase family. IF-2 subfamily.

The protein localises to the cytoplasm. In terms of biological role, one of the essential components for the initiation of protein synthesis. Protects formylmethionyl-tRNA from spontaneous hydrolysis and promotes its binding to the 30S ribosomal subunits. Also involved in the hydrolysis of GTP during the formation of the 70S ribosomal complex. In Shouchella clausii (strain KSM-K16) (Alkalihalobacillus clausii), this protein is Translation initiation factor IF-2.